We begin with the raw amino-acid sequence, 250 residues long: Leucyl/phenylalanyl-tRNA--protein transferase (250 aa).

The protein belongs to the L/F-transferase family.

It localises to the cytoplasm. It carries out the reaction N-terminal L-lysyl-[protein] + L-leucyl-tRNA(Leu) = N-terminal L-leucyl-L-lysyl-[protein] + tRNA(Leu) + H(+). The catalysed reaction is N-terminal L-arginyl-[protein] + L-leucyl-tRNA(Leu) = N-terminal L-leucyl-L-arginyl-[protein] + tRNA(Leu) + H(+). It catalyses the reaction L-phenylalanyl-tRNA(Phe) + an N-terminal L-alpha-aminoacyl-[protein] = an N-terminal L-phenylalanyl-L-alpha-aminoacyl-[protein] + tRNA(Phe). Its function is as follows. Functions in the N-end rule pathway of protein degradation where it conjugates Leu, Phe and, less efficiently, Met from aminoacyl-tRNAs to the N-termini of proteins containing an N-terminal arginine or lysine. The polypeptide is Leucyl/phenylalanyl-tRNA--protein transferase (Xanthomonas oryzae pv. oryzae (strain MAFF 311018)).